The sequence spans 430 residues: Histidine--tRNA ligase (430 aa).

The protein belongs to the class-II aminoacyl-tRNA synthetase family. In terms of assembly, homodimer.

The protein resides in the cytoplasm. It catalyses the reaction tRNA(His) + L-histidine + ATP = L-histidyl-tRNA(His) + AMP + diphosphate + H(+). In Acinetobacter baumannii (strain AB307-0294), this protein is Histidine--tRNA ligase.